The sequence spans 195 residues: dCTP deaminase (195 aa).

DCTP is bound by residues 110 to 115 (RSSLAR), Asp-128, 136 to 138 (VLE), Tyr-171, Lys-178, and Gln-182. Glu-138 functions as the Proton donor/acceptor in the catalytic mechanism.

This sequence belongs to the dCTP deaminase family. In terms of assembly, homotrimer.

It carries out the reaction dCTP + H2O + H(+) = dUTP + NH4(+). The protein operates within pyrimidine metabolism; dUMP biosynthesis; dUMP from dCTP (dUTP route): step 1/2. Its function is as follows. Catalyzes the deamination of dCTP to dUTP. In Idiomarina loihiensis (strain ATCC BAA-735 / DSM 15497 / L2-TR), this protein is dCTP deaminase.